The primary structure comprises 341 residues: 5-formaminoimidazole-4-carboxamide-1-(beta)-D-ribofuranosyl 5'-monophosphate synthetase (341 aa).

5-amino-1-(5-phospho-beta-D-ribosyl)imidazole-4-carboxamide contacts are provided by histidine 27 and serine 92. Positions 113 to 328 constitute an ATP-grasp domain; sequence RELLRWEADQ…MGERIAHEIK (216 aa). Residues 143 to 195 and glutamate 217 contribute to the ATP site; that span reads AEEV…VPAY. Asparagine 237 contacts 5-amino-1-(5-phospho-beta-D-ribosyl)imidazole-4-carboxamide. Residues glutamate 276 and glutamate 289 each contribute to the Mg(2+) site.

This sequence belongs to the phosphohexose mutase family. Requires Mg(2+) as cofactor. The cofactor is Mn(2+).

It catalyses the reaction 5-amino-1-(5-phospho-beta-D-ribosyl)imidazole-4-carboxamide + formate + ATP = 5-formamido-1-(5-phospho-D-ribosyl)imidazole-4-carboxamide + ADP + phosphate. It functions in the pathway purine metabolism; IMP biosynthesis via de novo pathway; 5-formamido-1-(5-phospho-D-ribosyl)imidazole-4-carboxamide from 5-amino-1-(5-phospho-D-ribosyl)imidazole-4-carboxamide (formate route): step 1/1. Catalyzes the ATP- and formate-dependent formylation of 5-aminoimidazole-4-carboxamide-1-beta-d-ribofuranosyl 5'-monophosphate (AICAR) to 5-formaminoimidazole-4-carboxamide-1-beta-d-ribofuranosyl 5'-monophosphate (FAICAR) in the absence of folates. The sequence is that of 5-formaminoimidazole-4-carboxamide-1-(beta)-D-ribofuranosyl 5'-monophosphate synthetase from Pyrobaculum aerophilum (strain ATCC 51768 / DSM 7523 / JCM 9630 / CIP 104966 / NBRC 100827 / IM2).